The following is a 160-amino-acid chain: Ribosomal RNA large subunit methyltransferase H (160 aa).

S-adenosyl-L-methionine contacts are provided by residues Leu-76, Gly-108, and 127 to 132 (LGELTW).

The protein belongs to the RNA methyltransferase RlmH family. As to quaternary structure, homodimer.

Its subcellular location is the cytoplasm. The enzyme catalyses pseudouridine(1915) in 23S rRNA + S-adenosyl-L-methionine = N(3)-methylpseudouridine(1915) in 23S rRNA + S-adenosyl-L-homocysteine + H(+). Its function is as follows. Specifically methylates the pseudouridine at position 1915 (m3Psi1915) in 23S rRNA. The polypeptide is Ribosomal RNA large subunit methyltransferase H (Brucella anthropi (strain ATCC 49188 / DSM 6882 / CCUG 24695 / JCM 21032 / LMG 3331 / NBRC 15819 / NCTC 12168 / Alc 37) (Ochrobactrum anthropi)).